Reading from the N-terminus, the 580-residue chain is 2-succinyl-5-enolpyruvyl-6-hydroxy-3-cyclohexene-1-carboxylate synthase (580 aa).

This sequence belongs to the TPP enzyme family. MenD subfamily. Homodimer. Mg(2+) serves as cofactor. It depends on Mn(2+) as a cofactor. The cofactor is thiamine diphosphate.

The catalysed reaction is isochorismate + 2-oxoglutarate + H(+) = 5-enolpyruvoyl-6-hydroxy-2-succinyl-cyclohex-3-ene-1-carboxylate + CO2. The protein operates within quinol/quinone metabolism; 1,4-dihydroxy-2-naphthoate biosynthesis; 1,4-dihydroxy-2-naphthoate from chorismate: step 2/7. Its pathway is quinol/quinone metabolism; menaquinone biosynthesis. In terms of biological role, catalyzes the thiamine diphosphate-dependent decarboxylation of 2-oxoglutarate and the subsequent addition of the resulting succinic semialdehyde-thiamine pyrophosphate anion to isochorismate to yield 2-succinyl-5-enolpyruvyl-6-hydroxy-3-cyclohexene-1-carboxylate (SEPHCHC). The polypeptide is 2-succinyl-5-enolpyruvyl-6-hydroxy-3-cyclohexene-1-carboxylate synthase (Listeria monocytogenes serotype 4b (strain F2365)).